A 467-amino-acid polypeptide reads, in one-letter code: Gamma-aminobutyric acid receptor subunit gamma-3 (467 aa).

A signal peptide spans 1 to 17 (MAAKLLLLLCLFSGLHA). Residues 18 to 256 (RSRRVEEDEN…FELSRRMGYF (239 aa)) lie on the Extracellular side of the membrane. The N-linked (GlcNAc...) asparagine glycan is linked to Asn-110. Cysteines 171 and 185 form a disulfide. A glycan (N-linked (GlcNAc...) asparagine) is linked at Asn-228. A helical membrane pass occupies residues 257–277 (TIQTYIPCILTVVLSWVSFWI). Residues 278 to 283 (KKDATP) lie on the Cytoplasmic side of the membrane. Residues 284–303 (ARTTLGITTVLTMTTLSTIA) form a helical membrane-spanning segment. Over 304 to 311 (RKSLPRVS) the chain is Extracellular. The helical transmembrane segment at 312 to 332 (YVTAMDLFVTVCFLFVFAALM) threads the bilayer. Residues 333–446 (EYATLNYYSS…DVSELDSYSR (114 aa)) lie on the Cytoplasmic side of the membrane. The helical transmembrane segment at 447–467 (VFFPTSFLLFNLVYWVGYLYL) threads the bilayer.

The protein belongs to the ligand-gated ion channel (TC 1.A.9) family. Gamma-aminobutyric acid receptor (TC 1.A.9.5) subfamily. GABRG3 sub-subfamily. In terms of assembly, heteropentamer, formed by a combination of alpha (GABRA1-6), beta (GABRB1-3), gamma (GABRG1-3), delta (GABRD), epsilon (GABRE), rho (GABRR1-3), pi (GABRP) and theta (GABRQ) chains, each subunit exhibiting distinct physiological and pharmacological properties. May be palmitoylated. Expressed in brain.

It localises to the postsynaptic cell membrane. Its subcellular location is the cell membrane. It carries out the reaction chloride(in) = chloride(out). Gamma subunit of the heteropentameric ligand-gated chloride channel gated by gamma-aminobutyric acid (GABA), a major inhibitory neurotransmitter in the brain. GABA-gated chloride channels, also named GABA(A) receptors (GABAAR), consist of five subunits arranged around a central pore and contain GABA active binding site(s) located at the alpha and beta subunit interface(s). When activated by GABA, GABAARs selectively allow the flow of chloride across the cell membrane down their electrochemical gradient. This is Gamma-aminobutyric acid receptor subunit gamma-3 from Mus musculus (Mouse).